Reading from the N-terminus, the 241-residue chain is ATP synthase subunit a (241 aa).

5 consecutive transmembrane segments (helical) span residues 30 to 50 (GQVF…ISLG), 91 to 111 (FIGT…LIPW), 128 to 148 (INTT…AGLS), 193 to 213 (LVVG…VMFL), and 214 to 234 (GLFT…YYIG).

Belongs to the ATPase A chain family. As to quaternary structure, F-type ATPases have 2 components, CF(1) - the catalytic core - and CF(0) - the membrane proton channel. CF(1) has five subunits: alpha(3), beta(3), gamma(1), delta(1), epsilon(1). CF(0) has four main subunits: a, b, b' and c.

The protein localises to the cellular thylakoid membrane. In terms of biological role, key component of the proton channel; it plays a direct role in the translocation of protons across the membrane. The sequence is that of ATP synthase subunit a from Prochlorococcus marinus (strain MIT 9312).